A 156-amino-acid chain; its full sequence is Small ribosomal subunit protein uS7 (156 aa).

It belongs to the universal ribosomal protein uS7 family. Part of the 30S ribosomal subunit. Contacts proteins S9 and S11.

Functionally, one of the primary rRNA binding proteins, it binds directly to 16S rRNA where it nucleates assembly of the head domain of the 30S subunit. Is located at the subunit interface close to the decoding center, probably blocks exit of the E-site tRNA. This is Small ribosomal subunit protein uS7 from Streptococcus agalactiae serotype Ia (strain ATCC 27591 / A909 / CDC SS700).